Reading from the N-terminus, the 265-residue chain is S-acyl fatty acid synthase thioesterase, medium chain (265 aa).

Methionine 1 carries the N-acetylmethionine modification. Residues serine 101 and histidine 237 contribute to the active site.

Belongs to the thioesterase family. Interacts (via C-terminus) with FASN. Detected both in lactating and non-lactating breast epithelium (at protein level). Isoform 2 is up-regulated in bone marrow-derived mononuclear cells of rheumatoid arthritis patients.

It is found in the cytoplasm. Its subcellular location is the cytosol. The catalysed reaction is (9Z)-octadecenoyl-[ACP] + H2O = (9Z)-octadecenoate + holo-[ACP] + H(+). The enzyme catalyses decanoyl-CoA + H2O = decanoate + CoA + H(+). It catalyses the reaction dodecanoyl-CoA + H2O = dodecanoate + CoA + H(+). It carries out the reaction tetradecanoyl-CoA + H2O = tetradecanoate + CoA + H(+). The catalysed reaction is hexadecanoyl-CoA + H2O = hexadecanoate + CoA + H(+). Contributes to the release of free fatty acids from fatty acid synthase (FASN). Has broad substrate specificity, giving rise to a range of free fatty acids with chain lengths between 10 and 16 carbon atoms (C10 - C16). This is S-acyl fatty acid synthase thioesterase, medium chain from Homo sapiens (Human).